Here is a 198-residue protein sequence, read N- to C-terminus: MKVAVVGVQGDVEEHVLATKRALKRLGIDGEVVATRRRGVVSRSDAVILPGGESTTISKLIFSDGIADEILQLAEEGKPVMGTCAGLILLSKYGDEQVEKTNTKLLGLLDAKVKRNAFGRQRESFQVPLDVKYVGKFDAVFIRAPAITEVGKDVEVLATFENLIVAARQKNVLGLAFHPELTDDTRIHEFFLKLGETS.

Residue 52 to 54 coordinates L-glutamine; it reads GES. Catalysis depends on cysteine 84, which acts as the Nucleophile. Residues arginine 115 and 142–143 each bind L-glutamine; that span reads IR. Catalysis depends on charge relay system residues histidine 178 and glutamate 180.

This sequence belongs to the glutaminase PdxT/SNO family. As to quaternary structure, in the presence of PdxS, forms a dodecamer of heterodimers. Only shows activity in the heterodimer.

The catalysed reaction is aldehydo-D-ribose 5-phosphate + D-glyceraldehyde 3-phosphate + L-glutamine = pyridoxal 5'-phosphate + L-glutamate + phosphate + 3 H2O + H(+). It catalyses the reaction L-glutamine + H2O = L-glutamate + NH4(+). Its pathway is cofactor biosynthesis; pyridoxal 5'-phosphate biosynthesis. Catalyzes the hydrolysis of glutamine to glutamate and ammonia as part of the biosynthesis of pyridoxal 5'-phosphate. The resulting ammonia molecule is channeled to the active site of PdxS. In Archaeoglobus fulgidus (strain ATCC 49558 / DSM 4304 / JCM 9628 / NBRC 100126 / VC-16), this protein is Pyridoxal 5'-phosphate synthase subunit PdxT.